The primary structure comprises 207 residues: MPKVDLYNMKGEVVGDIQLSDNVFGTDVNKDALHAVVVNQLANRRQGTQSTKTKSEVRGGGKKPWRQKGTGRARQGSIRSAQWVKGGIVLGPKPRSYRYTLPKKVKRIAMKSALTSKVSGNEIFVLDALALDAIKTKSMVGVLNNLKVDSSALLVIDSKNENIVKSARNIPGIKTAYVNTLNVFDILKYDKFIITKDAVEKVEEVYA.

Residues 44-76 (RRQGTQSTKTKSEVRGGGKKPWRQKGTGRARQG) form a disordered region. Over residues 60–71 (GGKKPWRQKGTG) the composition is skewed to basic residues.

This sequence belongs to the universal ribosomal protein uL4 family. As to quaternary structure, part of the 50S ribosomal subunit.

Its function is as follows. One of the primary rRNA binding proteins, this protein initially binds near the 5'-end of the 23S rRNA. It is important during the early stages of 50S assembly. It makes multiple contacts with different domains of the 23S rRNA in the assembled 50S subunit and ribosome. Functionally, forms part of the polypeptide exit tunnel. In Ruminiclostridium cellulolyticum (strain ATCC 35319 / DSM 5812 / JCM 6584 / H10) (Clostridium cellulolyticum), this protein is Large ribosomal subunit protein uL4.